Here is a 639-residue protein sequence, read N- to C-terminus: Putative oxidoreductase UacF (639 aa).

5 4Fe-4S ferredoxin-type domains span residues 3-32 (KFIA…ENWP), 47-77 (KGQA…TFQS), 78-107 (DSVQ…MVDT), 110-139 (QKCD…LMDD), and 201-235 (QQAT…YIRL). Residues C12, C15, C18, C22, C56, C59, C64, C68, C87, C90, C93, C97, C112, C115, C125, C129, C210, C213, C219, and C223 each contribute to the [4Fe-4S] cluster site.

[4Fe-4S] cluster is required as a cofactor.

Involved in formate-dependent uric acid degradation under microaerobic and anaerobic conditions. May reduce the enzymes necessary for uric acid degradation. This is Putative oxidoreductase UacF from Escherichia coli (strain K12).